Reading from the N-terminus, the 121-residue chain is Spermidine export protein MdtJ (121 aa).

Helical transmembrane passes span 1–21, 32–52, 55–75, and 82–102; these read MYIY…GTLS, GGFI…SFAV, IALG…ITLF, and ESLS…IVLI.

Belongs to the drug/metabolite transporter (DMT) superfamily. Small multidrug resistance (SMR) (TC 2.A.7.1) family. MdtJ subfamily. Forms a complex with MdtI.

The protein resides in the cell inner membrane. Catalyzes the excretion of spermidine. This chain is Spermidine export protein MdtJ, found in Escherichia coli O127:H6 (strain E2348/69 / EPEC).